The following is a 589-amino-acid chain: MTSRDLGSHDNLSPPFANSRIQSKTERGSYSSYGRENVQGCHQSLLGGDMDMGNPGTLSPTKPGSQYYPYSSNNARRRPLHSSTMEVQTKKVRKVPPGLPSSVYAPSASTADYNRDSPGYSSSKPAASTFSSSFFMQDGHHSSDPWSSSSGMNQPGYGGMLGNSHIPQSSSYCSLHPHERLSYPSHSSADINSSLPPMSTFHRSGTNHYSTSSCTPPANGTDSIMANRGTGAAGSSQTGDALGKALASIYSPDHTNNSFSSNPSTPVGSPPSLSAGTAVWSRNGGQASSSPNYEGPLHSLQSRIEDRLERLDDAIHVLRNHAVGPSTAVPGGHGDMHGIIGPSHNGAMGSLGSGYGTGLLSANRHSLMVGAHREDGVALRGSHSLLPNQVPVPQLPVQSATSPDLNPPQDPYRGMPPGLQGQSVSSGSSEIKSDDEGDENLQDTKSSEDKKLDDDKKDIKSITRSRSSNNDDEDLTPEQKAEREKERRMANNARERLRVRDINEAFKELGRMVQLHLKSDKPQTKLLILHQAVAVILSLEQQVRERNLNPKAACLKRREEEKVSSEPPPLSLAGPHPGMGDTANHMGQM.

Disordered regions lie at residues 1 to 124 (MTSR…SSSK), 138 to 163 (DGHH…MLGN), 184 to 239 (PSHS…SQTG), 254 to 297 (HTNN…EGPL), 384 to 492 (SLLP…MANN), and 556 to 589 (KRRE…MGQM). Serine 8 and serine 13 each carry phosphoserine. Residues 56–74 (GTLSPTKPGSQYYPYSSNN) show a composition bias toward polar residues. The tract at residues 136–157 (MQDGHHSSDPWSSSSGMNQPGY) is leucine-zipper. A compositionally biased stretch (polar residues) spans 184-224 (PSHSSADINSSLPPMSTFHRSGTNHYSTSSCTPPANGTDSI). The segment covering 255–266 (TNNSFSSNPSTP) has biased composition (low complexity). Over residues 283 to 292 (NGGQASSSPN) the composition is skewed to polar residues. Position 290 is a phosphoserine (serine 290). Residues 380–403 (RGSHSLLPNQVPVPQLPVQSATSP) form a class A specific domain region. Low complexity-rich tracts occupy residues 385–398 (LLPN…LPVQ) and 421–430 (GQSVSSGSSE). Serine 433 carries the post-translational modification Phosphoserine. 2 stretches are compositionally biased toward basic and acidic residues: residues 445–461 (KSSE…DIKS) and 477–492 (PEQK…MANN). A bHLH domain is found at 486-539 (ERRMANNARERLRVRDINEAFKELGRMVQLHLKSDKPQTKLLILHQAVAVILSL).

In terms of assembly, efficient DNA binding requires dimerization with another bHLH protein. Forms homo- or heterooligomers with myogenin. Interacts with HIVEP2. Interacts with NEUROD2. Interacts with AGBL1.

It localises to the nucleus. Functionally, transcription factor that binds to the immunoglobulin enhancer Mu-E5/KE5-motif. Involved in the initiation of neuronal differentiation. Activates transcription by binding to the E box (5'-CANNTG-3'). Binds to the E-box present in the somatostatin receptor 2 initiator element (SSTR2-INR) to activate transcription. Interacts with the CCAAT displacement protein (CDP2) to bind the tyrosine hydroxylase enhancer. The sequence is that of Transcription factor 4 (Tcf4) from Rattus norvegicus (Rat).